The chain runs to 379 residues: Queuine tRNA-ribosyltransferase (379 aa).

Residue Asp95 is the Proton acceptor of the active site. Substrate contacts are provided by residues 95–99, Asp149, Gln197, and Gly224; that span reads DSGGF. The RNA binding stretch occupies residues 255-261; it reads GVGMPAE. The active-site Nucleophile is the Asp274. Zn(2+)-binding residues include Cys312, Cys314, Cys317, and His343.

It belongs to the queuine tRNA-ribosyltransferase family. In terms of assembly, homodimer. Within each dimer, one monomer is responsible for RNA recognition and catalysis, while the other monomer binds to the replacement base PreQ1. The cofactor is Zn(2+).

The enzyme catalyses 7-aminomethyl-7-carbaguanine + guanosine(34) in tRNA = 7-aminomethyl-7-carbaguanosine(34) in tRNA + guanine. It functions in the pathway tRNA modification; tRNA-queuosine biosynthesis. In terms of biological role, catalyzes the base-exchange of a guanine (G) residue with the queuine precursor 7-aminomethyl-7-deazaguanine (PreQ1) at position 34 (anticodon wobble position) in tRNAs with GU(N) anticodons (tRNA-Asp, -Asn, -His and -Tyr). Catalysis occurs through a double-displacement mechanism. The nucleophile active site attacks the C1' of nucleotide 34 to detach the guanine base from the RNA, forming a covalent enzyme-RNA intermediate. The proton acceptor active site deprotonates the incoming PreQ1, allowing a nucleophilic attack on the C1' of the ribose to form the product. After dissociation, two additional enzymatic reactions on the tRNA convert PreQ1 to queuine (Q), resulting in the hypermodified nucleoside queuosine (7-(((4,5-cis-dihydroxy-2-cyclopenten-1-yl)amino)methyl)-7-deazaguanosine). The chain is Queuine tRNA-ribosyltransferase from Solibacter usitatus (strain Ellin6076).